A 136-amino-acid polypeptide reads, in one-letter code: MSQILAMLPDSLVAKWNVVVSVAALFNTVQSFLTPKLTKRVYSNTNEVNGLQGRTFGIWTLLSAIVRFYCAYHITNPDVYFLCQCTYYLACFHFLSEWLLFRTTNLGPGLLSPIVVSTVSIWFMAKEKASILGIAA.

Transmembrane regions (helical) follow at residues 18–34 (VVVS…SFLT), 56–72 (FGIW…YCAY), 79–95 (VYFL…FHFL), and 109–125 (GLLS…WFMA).

This sequence belongs to the ERG28 family. As to quaternary structure, heterotetramer of erg25, erg26, erg27 and erg28. Erg28 acts as a scaffold to tether erg27 and other 4,4-demethylation-related enzymes, forming a demethylation enzyme complex, in the endoplasmic reticulum.

It localises to the endoplasmic reticulum membrane. Its pathway is steroid metabolism; ergosterol biosynthesis. Functionally, part of the third module of ergosterol biosynthesis pathway that includes by the late steps of the pathway. Erg28 has a role as a scaffold to help anchor the catalytic components of the C-4 demethylation complex erg25, erg26 and erg27 to the endoplasmic reticulum. The third module or late pathway involves the ergosterol synthesis itself through consecutive reactions that mainly occur in the endoplasmic reticulum (ER) membrane. Firstly, the squalene synthase erg9 catalyzes the condensation of 2 farnesyl pyrophosphate moieties to form squalene, which is the precursor of all steroids. Secondly, squalene is converted into lanosterol by the consecutive action of the squalene epoxidase erg1 and the lanosterol synthase erg7. The lanosterol 14-alpha-demethylase erg11/cyp1 catalyzes C14-demethylation of lanosterol to produce 4,4'-dimethyl cholesta-8,14,24-triene-3-beta-ol. In the next steps, a complex process involving various demethylation, reduction and desaturation reactions catalyzed by the C-14 reductase erg24 and the C-4 demethylation complex erg25-erg26-erg27 leads to the production of zymosterol. Erg28 likely functions in the C-4 demethylation complex reaction by tethering erg26 and Erg27 to the endoplasmic reticulum or to facilitate interaction between these proteins. Then, the sterol 24-C-methyltransferase erg6 catalyzes the methyl transfer from S-adenosyl-methionine to the C-24 of zymosterol to form fecosterol. The C-8 sterol isomerase erg2 catalyzes the reaction which results in unsaturation at C-7 in the B ring of sterols and thus converts fecosterol to episterol. The sterol-C5-desaturases erg31 and erg32 then catalyze the introduction of a C-5 double bond in the B ring to produce 5-dehydroepisterol. The C-22 sterol desaturase erg5 further converts 5-dehydroepisterol into ergosta-5,7,22,24(28)-tetraen-3beta-ol by forming the C-22(23) double bond in the sterol side chain. Finally, ergosta-5,7,22,24(28)-tetraen-3beta-ol is substrate of the C-24(28) sterol reductase erg4 to produce ergosterol. In the genus Schizosaccharomyces, a second route exists between lanosterol and fecosterol, via the methylation of lanosterol to eburicol by erg6, followed by C14-demethylation by erg11/cyp1 and C4-demethylation by the demethylation complex erg25-erg26-erg27. Its function is as follows. Extends the chronological lifespan when overexpressed. The polypeptide is Ergosterol biosynthetic protein 28 (Schizosaccharomyces pombe (strain 972 / ATCC 24843) (Fission yeast)).